Reading from the N-terminus, the 189-residue chain is Peptidyl-tRNA hydrolase (189 aa).

Tyr15 contacts tRNA. His20 (proton acceptor) is an active-site residue. Residues Tyr67, Asn69, and Asn115 each coordinate tRNA.

Belongs to the PTH family. Monomer.

It is found in the cytoplasm. It carries out the reaction an N-acyl-L-alpha-aminoacyl-tRNA + H2O = an N-acyl-L-amino acid + a tRNA + H(+). Hydrolyzes ribosome-free peptidyl-tRNAs (with 1 or more amino acids incorporated), which drop off the ribosome during protein synthesis, or as a result of ribosome stalling. Its function is as follows. Catalyzes the release of premature peptidyl moieties from peptidyl-tRNA molecules trapped in stalled 50S ribosomal subunits, and thus maintains levels of free tRNAs and 50S ribosomes. This Symbiobacterium thermophilum (strain DSM 24528 / JCM 14929 / IAM 14863 / T) protein is Peptidyl-tRNA hydrolase.